The primary structure comprises 598 residues: N-acetylmuramoyl-L-alanine amidase (598 aa).

An N-terminal signal peptide occupies residues 1-31 (MSPGNWKTTMVVRGILLILYGLLLQPEPGTA). Disordered stretches follow at residues 172-194 (SSAHKDTSADVNSADVGTLSPNV) and 212-233 (STGVQVTSPDVQVSSPDTKAKS). Serine 261 carries the phosphoserine modification. An N-linked (GlcNAc...) asparagine glycan is attached at asparagine 353. An N-acetylmuramoyl-L-alanine amidase domain is found at 428 to 554 (FLYIHHTYVP…RQLVRTDCPG (127 aa)). Histidine 432 is a binding site for Zn(2+). The cysteines at positions 441 and 447 are disulfide-linked. A glycan (N-linked (GlcNAc...) asparagine) is linked at asparagine 507. Positions 544 and 552 each coordinate Zn(2+).

Belongs to the N-acetylmuramoyl-L-alanine amidase 2 family. The cofactor is Zn(2+).

It localises to the secreted. The protein localises to the membrane. The catalysed reaction is Hydrolyzes the link between N-acetylmuramoyl residues and L-amino acid residues in certain cell-wall glycopeptides.. Functionally, may play a scavenger role by digesting biologically active peptidoglycan (PGN) into biologically inactive fragments. Has no direct bacteriolytic activity. The polypeptide is N-acetylmuramoyl-L-alanine amidase (PGLYRP2) (Sus scrofa (Pig)).